A 282-amino-acid polypeptide reads, in one-letter code: NADPH-dependent 7-cyano-7-deazaguanine reductase (282 aa).

A substrate-binding site is contributed by 90–92; sequence IES. Residue 92–93 coordinates NADPH; that stretch reads SK. Cys190 serves as the catalytic Thioimide intermediate. The active-site Proton donor is Asp197. 229-230 serves as a coordination point for substrate; the sequence is HE. Residue 258–259 participates in NADPH binding; the sequence is RG.

Belongs to the GTP cyclohydrolase I family. QueF type 2 subfamily. In terms of assembly, homodimer.

It is found in the cytoplasm. It catalyses the reaction 7-aminomethyl-7-carbaguanine + 2 NADP(+) = 7-cyano-7-deazaguanine + 2 NADPH + 3 H(+). The protein operates within tRNA modification; tRNA-queuosine biosynthesis. In terms of biological role, catalyzes the NADPH-dependent reduction of 7-cyano-7-deazaguanine (preQ0) to 7-aminomethyl-7-deazaguanine (preQ1). The polypeptide is NADPH-dependent 7-cyano-7-deazaguanine reductase (Aeromonas salmonicida (strain A449)).